The chain runs to 88 residues: YcgL domain-containing protein HI_1446 (88 aa).

Residues 1 to 85 enclose the YcgL domain; sequence MLCAIYKSKK…QDDGLFNSLS (85 aa).

In Haemophilus influenzae (strain ATCC 51907 / DSM 11121 / KW20 / Rd), this protein is YcgL domain-containing protein HI_1446.